We begin with the raw amino-acid sequence, 442 residues long: Protoheme IX farnesyltransferase (442 aa).

Residues 1–167 (MGVYSLLVLG…AYVQLMKPRL (167 aa)) form a unknown region. 11 helical membrane passes run 49–69 (AAALTGLAVVGAAVLAWRTGA), 76–96 (AVTLALALYPVQVVIGAYTAM), 106–126 (VHLTLGVGIFASLVVALAWTL), 167–187 (LMWLLCLVAGAGMALASSQLG), 194–214 (AATVVLTLGGGVLSIGASGTF), 245–265 (LAFGVVLGVASLAAFAAVNLL), 267–287 (AVLGLTAIAFYSIVYTLVLKP), 308–328 (WVAVTGAVGVGGVVLAGVIFL), 365–385 (HIVYYIGATLASAVVLAELTG), 386–406 (LGPLYAATTVLLGAVFLYFAI), and 421–441 (FHASNAYLGCLLVAVVLDTMV). The prenyltransferase stretch occupies residues 168–439 (MWLLCLVAGA…CLLVAVVLDT (272 aa)).

The protein in the C-terminal section; belongs to the UbiA prenyltransferase family. Protoheme IX farnesyltransferase subfamily.

The protein resides in the cell membrane. The enzyme catalyses heme b + (2E,6E)-farnesyl diphosphate + H2O = Fe(II)-heme o + diphosphate. The protein operates within porphyrin-containing compound metabolism; heme O biosynthesis; heme O from protoheme: step 1/1. In terms of biological role, converts heme B (protoheme IX) to heme O by substitution of the vinyl group on carbon 2 of heme B porphyrin ring with a hydroxyethyl farnesyl side group. The chain is Protoheme IX farnesyltransferase (ctaB) from Halobacterium salinarum (strain ATCC 700922 / JCM 11081 / NRC-1) (Halobacterium halobium).